Consider the following 234-residue polypeptide: MHFSPALKPGKLLKRYKRFLADVQLEDGTEITLHCPNTGSMRNCLFPGETVWFSTSNNPKRKYAHTWELMATPTGGLIGIHSGNANALVEEALNKGIITELTGYDSLSREVKYGDENSRIDILLESAQKPACYIEVKSCTLLEDGQGYFPDAVSLRGQKHLRELMHMASLGHRAVLLFVVQHTDIHSVAPAAHIDPEYANLLKKAILSGVEVLAYRCEISPDEIHLAQSCPVRV.

It belongs to the SfsA family.

In Shewanella sp. (strain MR-4), this protein is Sugar fermentation stimulation protein homolog.